Reading from the N-terminus, the 119-residue chain is Achromolysin (119 aa).

The protein belongs to the peptidase M4 family. It depends on Ca(2+) as a cofactor. Zn(2+) serves as cofactor.

The protein localises to the secreted. Its function is as follows. Has staphylolytic activity. The chain is Achromolysin from Achromobacter lyticus.